Here is a 118-residue protein sequence, read N- to C-terminus: MPAINKTKGSADRIKMKIRKGDTVQVISGKDKGKTGEVLKTLPYENRVLVQGINQRTKHVKPSQEGETGRIETKEFSLHASNVMIYSTKEKVASKVEIFVDKDGSKKRRLKKTGELID.

It belongs to the universal ribosomal protein uL24 family. Part of the 50S ribosomal subunit.

Its function is as follows. One of two assembly initiator proteins, it binds directly to the 5'-end of the 23S rRNA, where it nucleates assembly of the 50S subunit. In terms of biological role, one of the proteins that surrounds the polypeptide exit tunnel on the outside of the subunit. The polypeptide is Large ribosomal subunit protein uL24 (Prochlorococcus marinus (strain NATL2A)).